We begin with the raw amino-acid sequence, 957 residues long: Bifunctional glutamine synthetase adenylyltransferase/adenylyl-removing enzyme (957 aa).

Residues 1 to 449 (MTQHLERPEL…VFDDIIGTDE (449 aa)) are adenylyl removase. The adenylyl transferase stretch occupies residues 457 to 957 (SEQYNEMWTM…QEYLVPSSDE (501 aa)).

It belongs to the GlnE family. Mg(2+) is required as a cofactor.

The enzyme catalyses [glutamine synthetase]-O(4)-(5'-adenylyl)-L-tyrosine + phosphate = [glutamine synthetase]-L-tyrosine + ADP. The catalysed reaction is [glutamine synthetase]-L-tyrosine + ATP = [glutamine synthetase]-O(4)-(5'-adenylyl)-L-tyrosine + diphosphate. Involved in the regulation of glutamine synthetase GlnA, a key enzyme in the process to assimilate ammonia. When cellular nitrogen levels are high, the C-terminal adenylyl transferase (AT) inactivates GlnA by covalent transfer of an adenylyl group from ATP to specific tyrosine residue of GlnA, thus reducing its activity. Conversely, when nitrogen levels are low, the N-terminal adenylyl removase (AR) activates GlnA by removing the adenylyl group by phosphorolysis, increasing its activity. The regulatory region of GlnE binds the signal transduction protein PII (GlnB) which indicates the nitrogen status of the cell. This Photobacterium profundum (strain SS9) protein is Bifunctional glutamine synthetase adenylyltransferase/adenylyl-removing enzyme.